A 183-amino-acid polypeptide reads, in one-letter code: ATP-dependent protease subunit HslV (183 aa).

The active site involves T13. 3 residues coordinate Na(+): G168, C171, and T174.

Belongs to the peptidase T1B family. HslV subfamily. A double ring-shaped homohexamer of HslV is capped on each side by a ring-shaped HslU homohexamer. The assembly of the HslU/HslV complex is dependent on binding of ATP.

It is found in the cytoplasm. The enzyme catalyses ATP-dependent cleavage of peptide bonds with broad specificity.. With respect to regulation, allosterically activated by HslU binding. Functionally, protease subunit of a proteasome-like degradation complex believed to be a general protein degrading machinery. The protein is ATP-dependent protease subunit HslV of Xanthomonas campestris pv. campestris (strain ATCC 33913 / DSM 3586 / NCPPB 528 / LMG 568 / P 25).